A 1173-amino-acid polypeptide reads, in one-letter code: SMC5-SMC6 complex localization factor protein 2 (1173 aa).

A disordered region spans residues 1–109; the sequence is MTRRCMPARP…KPKRVPPEKS (109 aa). Composition is skewed to basic and acidic residues over residues 39 to 50 and 88 to 106; these read KRTESPGDRKQS and QFER…RVPP. An APIM motif motif is present at residues 137–149; the sequence is SLASKYLAKGTNI. Disordered regions lie at residues 161 to 230, 256 to 275, 280 to 373, 394 to 620, and 635 to 663; these read MKSL…PEES, QMEQ…SLSL, ERKY…QKEK, KEPS…EEET, and TPAA…VHPG. The span at 181–199 shows a compositional bias: basic and acidic residues; it reads ENNEKNDRDRGKTNADSKK. Low complexity-rich tracts occupy residues 212–221 and 262–275; these read SSRSLSSRSS and NSEN…SLSL. Over residues 280 to 293 the composition is skewed to basic and acidic residues; sequence ERKYKPRQEQRKQN. The segment covering 317 to 330 has biased composition (polar residues); that stretch reads SDSWEPTSAGSKQN. Basic and acidic residues-rich tracts occupy residues 339-349 and 355-373; these read NSVDSDLKSTR and KARE…QKEK. The segment covering 409 to 428 has biased composition (polar residues); it reads PSNSGNSGHHSTRNSDQIQV. Phosphoserine is present on Ser481. Residues 499–520 are compositionally biased toward basic and acidic residues; it reads SKKDKERSSSKECSGHSTESTK. Residues 571–592 are compositionally biased toward low complexity; sequence APSDKAPSEGESSGNSNAGSSA. Positions 602-619 are enriched in acidic residues; it reads DSDEESLGYNLDSDEEEE. Ser603, Ser607, and Ser614 each carry phosphoserine. The interaction with SIMC1 stretch occupies residues 635–1173; that stretch reads TPAATGKPPA…QLHDFWVPDS (539 aa). Positions 664-1166 are NSE6-like domain; sequence TYTNTLERLV…NCRPTQGQLH (503 aa). A required for interaction with SLF1 and RAD18 region spans residues 702 to 1173; sequence PIRIGEEDST…QLHDFWVPDS (472 aa).

The protein belongs to the FAM178 family. In terms of assembly, forms a heterodimer with SIMC1. Interacts with SLF1 (via N-terminus); this interaction links RAD18 to the SMC5-SMC6 complex. Interacts with RAD18; this interaction is increased in a SLF1-dependent manner. Interacts with SMC5 and SMC6. Widely expressed. Expressed at higher level in skeletal muscle and at slightly lower level in brain, liver and heart, than in lung, kidney, spleen and thymus.

The protein localises to the nucleus. Its subcellular location is the PML body. Plays a role in the DNA damage response (DDR) pathway by regulating postreplication repair of UV-damaged DNA and genomic stability maintenance. The SLF1-SLF2 complex acts to link RAD18 with the SMC5-SMC6 complex at replication-coupled interstrand cross-links (ICL) and DNA double-strand breaks (DSBs) sites on chromatin during DNA repair in response to stalled replication forks. Promotes the recruitment of the SMC5-SMC6 complex to DNA lesions. Plays a role in SMC5-SMC6 complex recruitment for viral restriction. Forms a complex with SIMC1 and this complex is required to recruit SMC5-SMC6 complex to PML nuclear bodies and sites of viral replication. This is SMC5-SMC6 complex localization factor protein 2 from Homo sapiens (Human).